The chain runs to 212 residues: Imidazole glycerol phosphate synthase subunit HisH (212 aa).

The Glutamine amidotransferase type-1 domain occupies 1-212; the sequence is MLAILDYKAG…YEYCKEVSDA (212 aa). Cys-79 (nucleophile) is an active-site residue. Catalysis depends on residues His-187 and Glu-189.

As to quaternary structure, heterodimer of HisH and HisF.

The protein localises to the cytoplasm. The catalysed reaction is 5-[(5-phospho-1-deoxy-D-ribulos-1-ylimino)methylamino]-1-(5-phospho-beta-D-ribosyl)imidazole-4-carboxamide + L-glutamine = D-erythro-1-(imidazol-4-yl)glycerol 3-phosphate + 5-amino-1-(5-phospho-beta-D-ribosyl)imidazole-4-carboxamide + L-glutamate + H(+). It carries out the reaction L-glutamine + H2O = L-glutamate + NH4(+). It participates in amino-acid biosynthesis; L-histidine biosynthesis; L-histidine from 5-phospho-alpha-D-ribose 1-diphosphate: step 5/9. Its function is as follows. IGPS catalyzes the conversion of PRFAR and glutamine to IGP, AICAR and glutamate. The HisH subunit catalyzes the hydrolysis of glutamine to glutamate and ammonia as part of the synthesis of IGP and AICAR. The resulting ammonia molecule is channeled to the active site of HisF. This chain is Imidazole glycerol phosphate synthase subunit HisH, found in Maridesulfovibrio salexigens (strain ATCC 14822 / DSM 2638 / NCIMB 8403 / VKM B-1763) (Desulfovibrio salexigens).